The sequence spans 519 residues: NADH dehydrogenase (519 aa).

Positions 1–183 (MVLEPQIKSQ…YLNGESFTSG (183 aa)) are membrane-binding. The tract at residues 184-519 (RMTVEEILAQ…TTPAESAAAK (336 aa)) is catalytic. 210 to 241 (DVLVVGGGPAGASSAIYAARKGIRTGIVADRF) contacts FAD. A disulfide bridge links C337 with C340. 349–379 (DVAVIGGGNSGVEAAIDLAGIVNHVTVLEFM) is a binding site for NAD(+). An FAD-binding site is contributed by 469-479 (TNVPGVFAAGD).

It belongs to the class-II pyridine nucleotide-disulfide oxidoreductase family. In terms of assembly, homodimer. FAD is required as a cofactor.

It localises to the cell membrane. The enzyme catalyses a ubiquinone + NADH + 5 H(+)(in) = a ubiquinol + NAD(+) + 4 H(+)(out). In terms of biological role, transfer of electrons from NADH to the respiratory chain. The immediate electron acceptor for the enzyme is believed to be ubiquinone. The protein is NADH dehydrogenase (ahpF) of Ferdinandcohnia aciditolerans (strain JCM 32973 / CCTCC AB 2017280 / YN-1) (Bacillus aciditolerans).